We begin with the raw amino-acid sequence, 335 residues long: Cytoplasmic envelopment protein 2 (335 aa).

Belongs to the herpesviridae cytoplasmic envelopment protein 2 family. Interacts with cytoplasmic envelopment protein 3 and with the capsid.

Its subcellular location is the virion tegument. It localises to the host cytoplasm. The protein localises to the host nucleus. Plays a critical role in cytoplasmic virus egress. Participates in the final step of tegumentation and envelope acquisition within the host cytoplasm by directly interacting with the capsid. Upon virion binding to target cell, a signaling cascade is triggered to disrupt the interaction with the capsid, thereby preparing capsid uncoating. The sequence is that of Cytoplasmic envelopment protein 2 (U65) from Human herpesvirus 6A (strain Uganda-1102) (HHV-6 variant A).